The chain runs to 176 residues: Secreted LysM effector ELP2 (176 aa).

The signal sequence occupies residues 1–18; the sequence is MQFSIFTVLAAAASFAVA. Low complexity predominate over residues 31 to 45; sequence TSAAANPSPTTSGAA. Residues 31-50 are disordered; the sequence is TSAAANPSPTTSGAANPSPT. The region spanning 58–102 is the LysM 1 domain; that stretch reads HKTTVKAGQTLTTIAERFHSGICDIAWQNKLENPNVIFVGQVLLV. N-linked (GlcNAc...) asparagine glycosylation occurs at Asn-111. The region spanning 129 to 173 is the LysM 2 domain; it reads ATYTIKSGDTFFAVAQSLGITTDSLTGANPGVVPENLQIDQVINV.

It belongs to the secreted LysM effector family. Forms homodimers in a chitin-independent manner through interactions at the N-termini of EPL2 monomers. Homodimers are further polymerized in a chitin-dependent manner.

The protein localises to the secreted. Its function is as follows. Secreted effector that enables the plant pathogenic fungus to manipulate host defenses for successful infection. Binds chitin oligomers and polymer with high affinity and plays a dual role, not only in the suppression of chitin-triggered immune responses, but also in appressorium function. Does not protect fungal hyphae against plant chitinases but suppresses chitin-triggered plant immune responses. Chitin-induced polymerization of homodimers forms a contiguous ELP2 highly oligomeric super-complexe that may precipitate at infection sites to eliminate chitin oligomers, and thus suppress the activation of chitin-induced plant immunity. In Colletotrichum higginsianum (strain IMI 349063) (Crucifer anthracnose fungus), this protein is Secreted LysM effector ELP2.